The following is an 891-amino-acid chain: Nitrate reductase [NAD(P)H] (891 aa).

The disordered stretch occupies residues 1–78 (MAASVEYNRQ…VKDPRDEATS (78 aa)). A compositionally biased stretch (basic and acidic residues) spans 63–76 (LDVEPSVKDPRDEA). Residue Cys168 participates in Mo-molybdopterin binding. The Cytochrome b5 heme-binding domain occupies 515 to 590 (SAQFTMSEVR…LEMYRVGELI (76 aa)). Heme-binding residues include His550 and His573. The FAD-binding FR-type domain maps to 630 to 742 (REKVRCRLVD…KGPVGHIEYA (113 aa)). Residues 682–685 (RAYT), 699–703 (LIKIY), Phe704, Phe711, 716–718 (LMS), and Thr769 each bind FAD.

It belongs to the nitrate reductase family. As to quaternary structure, homodimer. FAD is required as a cofactor. Requires heme as cofactor. The cofactor is Mo-molybdopterin.

The catalysed reaction is nitrite + NAD(+) + H2O = nitrate + NADH + H(+). It catalyses the reaction nitrite + NADP(+) + H2O = nitrate + NADPH + H(+). Nitrate reductase is a key enzyme involved in the first step of nitrate assimilation in plants, fungi and bacteria. This chain is Nitrate reductase [NAD(P)H] (NAR-7), found in Hordeum vulgare (Barley).